A 369-amino-acid chain; its full sequence is Opsin Rh6 (369 aa).

At 1 to 46 (MASLHPPSFAYMRDGRNLSLAESVPAEIMHMVDPYWYQWPPLEPMW) the chain is on the extracellular side. The N-linked (GlcNAc...) asparagine glycan is linked to Asn-17. Residues 47–71 (FGIIGFVIAILGTMSLAGNFIVMYI) traverse the membrane as a helical segment. Residues 72–83 (FTSSKGLRTPSN) are Cytoplasmic-facing. A helical transmembrane segment spans residues 84–109 (MFVVNLAFSDFMMMFTMFPPVVLNGF). Residues 110 to 123 (YGTWIMGPFLCELY) lie on the Extracellular side of the membrane. Cys-120 and Cys-197 are disulfide-bonded. Residues 124 to 143 (GMFGSLFGCVSIWSMTLIAY) form a helical membrane-spanning segment. The Cytoplasmic segment spans residues 144 to 162 (DRYCVIVKGMARKPLTATA). The chain crosses the membrane as a helical span at residues 163-186 (AVLRLMVVWTICGAWALMPLFGWN). The Extracellular portion of the chain corresponds to 187–210 (RYVPEGNMTACGTDYFAKDWWNRS). N-linked (GlcNAc...) asparagine glycosylation is found at Asn-193 and Asn-208. Residues 211–238 (YIIVYSLWVYLTPLLTIIFSYWHIMKAV) form a helical membrane-spanning segment. The Cytoplasmic segment spans residues 239–274 (AAHEKAMREQAKKMNVASLRNSEADKSKAIEIKLAK). The helical transmembrane segment at 275-298 (VALTTISLWFFAWTPYTIINYAGI) threads the bilayer. Over 299-305 (FESMHLS) the chain is Extracellular. A helical membrane pass occupies residues 306–330 (PLSTICGSVFAKANAVCNPIVYGLS). An N6-(retinylidene)lysine modification is found at Lys-317. At 331–369 (HPKYKQVLREKMPCLACGKDDLTSDSRTQATAEISESQA) the chain is on the cytoplasmic side.

Belongs to the G-protein coupled receptor 1 family. Opsin subfamily. In terms of processing, phosphorylated on some or all of the serine and threonine residues present in the C-terminal region. In terms of tissue distribution, each Drosophila eye is composed of 800 facets or ommatidia. Each ommatidium contains 8 photoreceptor cells (R1-R8), the R1 to R6 cells are outer cells, while R7 and R8 are inner cells. Rh6 is expressed in a subset of R8 cells, most likely expressed in the subset of R8 cells paired with Rh4-expressing R7 cells (R7y).

The protein resides in the membrane. Functionally, visual pigments are the light-absorbing molecules that mediate vision. They consist of an apoprotein, opsin, covalently linked to cis-retinal. This Drosophila melanogaster (Fruit fly) protein is Opsin Rh6 (Rh6).